The sequence spans 263 residues: Leucyl/phenylalanyl-tRNA--protein transferase (263 aa).

The protein belongs to the L/F-transferase family.

Its subcellular location is the cytoplasm. It catalyses the reaction N-terminal L-lysyl-[protein] + L-leucyl-tRNA(Leu) = N-terminal L-leucyl-L-lysyl-[protein] + tRNA(Leu) + H(+). The catalysed reaction is N-terminal L-arginyl-[protein] + L-leucyl-tRNA(Leu) = N-terminal L-leucyl-L-arginyl-[protein] + tRNA(Leu) + H(+). The enzyme catalyses L-phenylalanyl-tRNA(Phe) + an N-terminal L-alpha-aminoacyl-[protein] = an N-terminal L-phenylalanyl-L-alpha-aminoacyl-[protein] + tRNA(Phe). Functionally, functions in the N-end rule pathway of protein degradation where it conjugates Leu, Phe and, less efficiently, Met from aminoacyl-tRNAs to the N-termini of proteins containing an N-terminal arginine or lysine. This chain is Leucyl/phenylalanyl-tRNA--protein transferase, found in Novosphingobium aromaticivorans (strain ATCC 700278 / DSM 12444 / CCUG 56034 / CIP 105152 / NBRC 16084 / F199).